Consider the following 456-residue polypeptide: Cysteine--tRNA ligase (456 aa).

A Zn(2+)-binding site is contributed by cysteine 28. The 'HIGH' region signature appears at 30 to 40 (MTVYDYCHLGH). The Zn(2+) site is built by cysteine 209, histidine 234, and glutamate 238. A 'KMSKS' region motif is present at residues 266–270 (KMSKS). Lysine 269 is an ATP binding site.

This sequence belongs to the class-I aminoacyl-tRNA synthetase family. As to quaternary structure, monomer. It depends on Zn(2+) as a cofactor.

It localises to the cytoplasm. It carries out the reaction tRNA(Cys) + L-cysteine + ATP = L-cysteinyl-tRNA(Cys) + AMP + diphosphate. The sequence is that of Cysteine--tRNA ligase from Dechloromonas aromatica (strain RCB).